Here is a 484-residue protein sequence, read N- to C-terminus: MTIRHQGQQYRPRMAFLRKIEALVKDMQDPDTGVRVQNQKVKVVSIPHAMTGSDVLQWISQRLWISGLEAQNLGNFIVKYGYIYPLQDPRNLTLKPDSSLYRFQTPYFWPTQQWPAEDVDYAIYLAKRNIKKKGILEEYEKENYNFLNKKINYKWDFVIMQAREQYRAGKERNKVDRCALDCQEKAYWLVHRCPPGANNVLDYGLDRVTNPNEDQKQTVVSVRKEIMYYRQALMRSTVKSSVSLGGIVKYSEQFSSNDAIMSGCLPSNPWITDDTQFWDLNAKLVDIPTKMRVERWAFNFSELIRDPKGRQSFQHFLRKEFSGENLGFWEACEDLKYGDQSKVKEKAEEIYKLFLAPGARRWINIDGKTMDITVKGLKHPHRYVLDAAQTHIYMLMKKDSYARYLKSPIYKEMLAKAIEPQGTTRKSSSLPFMRRHLRSSPSPVILRQLEEEAKAREAATTVDITQVMSKLDRRSQLRKEPPPK.

The region spanning 30 to 105 (PDTGVRVQNQ…PDSSLYRFQT (76 aa)) is the DEP domain. A G protein gamma domain is found at 219 to 280 (VVSVRKEIMY…ITDDTQFWDL (62 aa)). The RGS domain occupies 299-414 (NFSELIRDPK…LKSPIYKEML (116 aa)). The interval 460–484 (TTVDITQVMSKLDRRSQLRKEPPPK) is disordered. The segment covering 470–484 (KLDRRSQLRKEPPPK) has biased composition (basic and acidic residues).

In terms of assembly, heterodimer with GNB5. Interacts with RGS7BP, leading to regulate the subcellular location of the heterodimer formed with GNB5. Component of the RGS9-1-Gbeta5 complex composed of RGS9 (RGS9-1), Gbeta5 (GNB5) and RGS9BP. Interacts with PDE6G and GNAT1. Phosphorylation is decreased by light exposition. In terms of tissue distribution, photoreceptor outer segments.

It is found in the membrane. Its function is as follows. Inhibits signal transduction by increasing the GTPase activity of G protein alpha subunits thereby driving them into their inactive GDP-bound form. Binds to GNAT1. Involved in phototransduction; key element in the recovery phase of visual transduction. This chain is Regulator of G-protein signaling 9 (RGS9), found in Bos taurus (Bovine).